The sequence spans 592 residues: Inactive metallocarboxypeptidase ECM14 (592 aa).

A signal peptide spans 1-21 (MRQFTHGTLLAILALANTISA). A propeptide spanning residues 22–174 (IPSFSANNYP…QTVYESYPSS (153 aa)) is cleaved from the precursor. The span at 170–179 (SYPSSSQRPT) shows a compositional bias: polar residues. Residues 170 to 191 (SYPSSSQRPTDNGRGFLPSRES) form a disordered region. A Peptidase M14 domain is found at 202–521 (DYQPLSVIGP…NAVMVLGKFL (320 aa)). Zn(2+) contacts are provided by His-264 and Glu-267. Substrate contacts are provided by residues 264 to 267 (HARE), Arg-322, and 339 to 340 (DR). Cys-333 and Cys-356 are oxidised to a cystine. The N-linked (GlcNAc...) asparagine glycan is linked to Asn-349. His-396 serves as a coordination point for Zn(2+). 397–398 (SY) is a substrate binding site. The interval 542 to 592 (ADKPILDDGDDDEEEDGQDKNDDSWIPDEYKNDNDHDDDDDGWGLRRRRKR) is disordered. The segment covering 548-558 (DDGDDDEEEDG) has biased composition (acidic residues). Residues 559-575 (QDKNDDSWIPDEYKNDN) are compositionally biased toward basic and acidic residues.

It belongs to the peptidase M14 family. The cofactor is Zn(2+).

The protein localises to the vacuole. It localises to the secreted. Functionally, inactive carboxypeptidase that may play a role in cell wall organization and biogenesis. The chain is Inactive metallocarboxypeptidase ECM14 (ECM14) from Blastomyces gilchristii (strain SLH14081) (Blastomyces dermatitidis).